The sequence spans 350 residues: Uroporphyrinogen decarboxylase (350 aa).

Residues 28 to 32 (RQAGR), aspartate 78, tyrosine 155, serine 210, and histidine 325 contribute to the substrate site.

The protein belongs to the uroporphyrinogen decarboxylase family. Homodimer.

It is found in the cytoplasm. The catalysed reaction is uroporphyrinogen III + 4 H(+) = coproporphyrinogen III + 4 CO2. Its pathway is porphyrin-containing compound metabolism; protoporphyrin-IX biosynthesis; coproporphyrinogen-III from 5-aminolevulinate: step 4/4. Functionally, catalyzes the decarboxylation of four acetate groups of uroporphyrinogen-III to yield coproporphyrinogen-III. This chain is Uroporphyrinogen decarboxylase, found in Picosynechococcus sp. (strain ATCC 27264 / PCC 7002 / PR-6) (Agmenellum quadruplicatum).